A 69-amino-acid chain; its full sequence is Large ribosomal subunit protein bL31 (69 aa).

Zn(2+) contacts are provided by cysteine 17, cysteine 19, cysteine 37, and cysteine 40.

Belongs to the bacterial ribosomal protein bL31 family. Type A subfamily. Part of the 50S ribosomal subunit. Requires Zn(2+) as cofactor.

Binds the 23S rRNA. This is Large ribosomal subunit protein bL31 from Caldicellulosiruptor saccharolyticus (strain ATCC 43494 / DSM 8903 / Tp8T 6331).